The primary structure comprises 161 residues: Transcriptional repressor NrdR (161 aa).

Over residues 1-11 the composition is skewed to basic residues; the sequence is MQCPHCQHHNS. Positions 1–21 are disordered; the sequence is MQCPHCQHHNSRVLESRSSEG. A zinc finger spans residues 3 to 34; it reads CPHCQHHNSRVLESRSSEGGQSIRRRRECLEC. An ATP-cone domain is found at 49–139; that stretch reads VTVIKQDGER…VYGRFQGIAD (91 aa).

The protein belongs to the NrdR family. Zn(2+) serves as cofactor.

Its function is as follows. Negatively regulates transcription of bacterial ribonucleotide reductase nrd genes and operons by binding to NrdR-boxes. This Synechocystis sp. (strain ATCC 27184 / PCC 6803 / Kazusa) protein is Transcriptional repressor NrdR.